We begin with the raw amino-acid sequence, 287 residues long: Acetyl-coenzyme A carboxylase carboxyl transferase subunit beta (287 aa).

In terms of domain architecture, CoA carboxyltransferase N-terminal spans 25–287; sequence VWTKCSACEQ…KMLNTHVIEE (263 aa). Zn(2+)-binding residues include Cys29, Cys32, Cys48, and Cys51. Residues 29 to 51 form a C4-type zinc finger; sequence CSACEQVLYRAELERNLEVCPKC.

It belongs to the AccD/PCCB family. In terms of assembly, acetyl-CoA carboxylase is a heterohexamer composed of biotin carboxyl carrier protein (AccB), biotin carboxylase (AccC) and two subunits each of ACCase subunit alpha (AccA) and ACCase subunit beta (AccD). It depends on Zn(2+) as a cofactor.

The protein resides in the cytoplasm. It carries out the reaction N(6)-carboxybiotinyl-L-lysyl-[protein] + acetyl-CoA = N(6)-biotinyl-L-lysyl-[protein] + malonyl-CoA. It participates in lipid metabolism; malonyl-CoA biosynthesis; malonyl-CoA from acetyl-CoA: step 1/1. In terms of biological role, component of the acetyl coenzyme A carboxylase (ACC) complex. Biotin carboxylase (BC) catalyzes the carboxylation of biotin on its carrier protein (BCCP) and then the CO(2) group is transferred by the transcarboxylase to acetyl-CoA to form malonyl-CoA. The sequence is that of Acetyl-coenzyme A carboxylase carboxyl transferase subunit beta from Aeromonas hydrophila subsp. hydrophila (strain ATCC 7966 / DSM 30187 / BCRC 13018 / CCUG 14551 / JCM 1027 / KCTC 2358 / NCIMB 9240 / NCTC 8049).